Here is a 472-residue protein sequence, read N- to C-terminus: Serine/threonine-protein kinase ULK3 (472 aa).

Residues 14 to 270 form the Protein kinase domain; that stretch reads FILTERLGSG…FQDFFAHPWV (257 aa). ATP contacts are provided by residues 20–28 and K44; that span reads LGSGTYATV. D137 serves as the catalytic Proton acceptor. S176 is modified (phosphoserine). Positions 280–348 constitute an MIT 1 domain; sequence SLGRATALVV…SRAEELKAIV (69 aa). Phosphoserine; by autocatalysis is present on residues S300, S350, S384, and S464. An MIT 2 domain is found at 375 to 444; it reads RLLAALEVAS…ARAEYLKEQV (70 aa).

Belongs to the protein kinase superfamily. Ser/Thr protein kinase family. APG1/unc-51/ULK1 subfamily. As to quaternary structure, interacts (via protein kinase domain) with SUFU. Post-translationally, autophosphorylated. Autophosphorylation is blocked by interaction with SUFU. In terms of tissue distribution, widely expressed. Highest levels observed in fetal brain. In adult tissues, high levels in brain, liver and kidney, moderate levels in testis and adrenal gland and low levels in heart, lung, stomach, thymus, prostate and placenta. In the brain, highest expression in the hippocampus, high levels also detected in the cerebellum, olfactory bulb and optic nerve. In the central nervous system, lowest levels in the spinal cord.

It localises to the cytoplasm. The catalysed reaction is L-seryl-[protein] + ATP = O-phospho-L-seryl-[protein] + ADP + H(+). The enzyme catalyses L-threonyl-[protein] + ATP = O-phospho-L-threonyl-[protein] + ADP + H(+). In terms of biological role, serine/threonine protein kinase that acts as a regulator of Sonic hedgehog (SHH) signaling and autophagy. Acts as a negative regulator of SHH signaling in the absence of SHH ligand: interacts with SUFU, thereby inactivating the protein kinase activity and preventing phosphorylation of GLI proteins (GLI1, GLI2 and/or GLI3). Positively regulates SHH signaling in the presence of SHH: dissociates from SUFU, autophosphorylates and mediates phosphorylation of GLI2, activating it and promoting its nuclear translocation. Phosphorylates in vitro GLI2, as well as GLI1 and GLI3, although less efficiently. Also acts as a regulator of autophagy: following cellular senescence, able to induce autophagy. This is Serine/threonine-protein kinase ULK3 (ULK3) from Homo sapiens (Human).